The following is a 355-amino-acid chain: N6-mAMP deaminase (355 aa).

Residues histidine 13 and histidine 15 each coordinate Zn(2+). N(6)-methyl-AMP is bound by residues histidine 15, asparagine 17, histidine 65, 97–100 (TTPK), aspartate 160, and glycine 190. A Zn(2+)-binding site is contributed by histidine 217. Residues glutamate 220, aspartate 295, and aspartate 296 each contribute to the N(6)-methyl-AMP site. Glutamate 220 functions as the Proton donor in the catalytic mechanism. Residue aspartate 295 coordinates Zn(2+).

Belongs to the metallo-dependent hydrolases superfamily. Adenosine and AMP deaminases family. Monomer. It depends on Zn(2+) as a cofactor.

It is found in the cytoplasm. It localises to the cytosol. The enzyme catalyses N(6)-methyl-AMP + H2O + H(+) = IMP + methylamine. In terms of biological role, catalyzes the hydrolysis of the free cytosolic methylated adenosine nucleotide N(6)-methyl-AMP (N6-mAMP) to produce inositol monophosphate (IMP) and methylamine. Is required for the catabolism of cytosolic N6-mAMP, which is derived from the degradation of mRNA containing N6-methylated adenine (m6A). Does not possess deaminase activity toward adenosine, AMP, N6-methyladenosine, or N6-mATP in vitro. The polypeptide is N6-mAMP deaminase (Arabidopsis thaliana (Mouse-ear cress)).